Consider the following 268-residue polypeptide: Tryptophan synthase alpha chain (268 aa).

Residues Glu-49 and Asp-60 each act as proton acceptor in the active site.

This sequence belongs to the TrpA family. As to quaternary structure, tetramer of two alpha and two beta chains.

It carries out the reaction (1S,2R)-1-C-(indol-3-yl)glycerol 3-phosphate + L-serine = D-glyceraldehyde 3-phosphate + L-tryptophan + H2O. The protein operates within amino-acid biosynthesis; L-tryptophan biosynthesis; L-tryptophan from chorismate: step 5/5. Functionally, the alpha subunit is responsible for the aldol cleavage of indoleglycerol phosphate to indole and glyceraldehyde 3-phosphate. The protein is Tryptophan synthase alpha chain of Pseudomonas aeruginosa (strain ATCC 15692 / DSM 22644 / CIP 104116 / JCM 14847 / LMG 12228 / 1C / PRS 101 / PAO1).